A 998-amino-acid chain; its full sequence is DNA damage-induced apoptosis suppressor protein (998 aa).

Residues 815 to 834 (DKQQASPSCPKNIKTPSQKI) are disordered. Over residues 817–834 (QQASPSCPKNIKTPSQKI) the composition is skewed to polar residues.

Highly expressed in colorectal and lung cancer tissues.

The protein resides in the cytoplasm. Its subcellular location is the nucleus. Functionally, may be an anti-apoptotic protein involved in DNA repair or cell survival. This chain is DNA damage-induced apoptosis suppressor protein (DDIAS), found in Homo sapiens (Human).